Consider the following 249-residue polypeptide: Triosephosphate isomerase (249 aa).

Residue N9–K11 participates in substrate binding. H94 functions as the Electrophile in the catalytic mechanism. E166 serves as the catalytic Proton acceptor. Residues G172, S214, and G235–G236 each bind substrate.

The protein belongs to the triosephosphate isomerase family. As to quaternary structure, homodimer.

It localises to the cytoplasm. It catalyses the reaction D-glyceraldehyde 3-phosphate = dihydroxyacetone phosphate. It functions in the pathway carbohydrate biosynthesis; gluconeogenesis. It participates in carbohydrate degradation; glycolysis; D-glyceraldehyde 3-phosphate from glycerone phosphate: step 1/1. Involved in the gluconeogenesis. Catalyzes stereospecifically the conversion of dihydroxyacetone phosphate (DHAP) to D-glyceraldehyde-3-phosphate (G3P). This is Triosephosphate isomerase from Leptospira biflexa serovar Patoc (strain Patoc 1 / Ames).